Reading from the N-terminus, the 396-residue chain is L-tyrosine/L-aspartate decarboxylase (396 aa).

K245 is subject to N6-(pyridoxal phosphate)lysine.

Belongs to the group II decarboxylase family. MfnA subfamily. In terms of assembly, homodimer. The cofactor is pyridoxal 5'-phosphate.

The enzyme catalyses L-tyrosine + H(+) = tyramine + CO2. It catalyses the reaction L-aspartate + H(+) = beta-alanine + CO2. It participates in cofactor biosynthesis; methanofuran biosynthesis. It functions in the pathway cofactor biosynthesis; coenzyme A biosynthesis. Its activity is regulated as follows. Inhibited by hydroxylamine and O-methylhydroxylamine. Catalyzes the decarboxylation of L-tyrosine to produce tyramine for methanofuran biosynthesis. Can also catalyze the decarboxylation of L-aspartate to produce beta-alanine for coenzyme A (CoA) biosynthesis. The sequence is that of L-tyrosine/L-aspartate decarboxylase from Methanocaldococcus jannaschii (strain ATCC 43067 / DSM 2661 / JAL-1 / JCM 10045 / NBRC 100440) (Methanococcus jannaschii).